A 140-amino-acid chain; its full sequence is C-type lectin 6 (140 aa).

Positions 1-23 (MGRLVFVSFGLLVVFLSLSGTGA) are cleaved as a signal peptide. Cystine bridges form between Cys25/Cys36, Cys53/Cys138, and Cys115/Cys130. Positions 32–139 (YEGHCYRVFQ…CSKTHNVICK (108 aa)) constitute a C-type lectin domain.

The protein belongs to the snaclec family. Heteromultimer; disulfide-linked. Expressed by the venom gland.

The protein localises to the secreted. Functionally, interferes with one step of hemostasis (modulation of platelet aggregation, or coagulation cascade, for example). This Crotalus adamanteus (Eastern diamondback rattlesnake) protein is C-type lectin 6.